We begin with the raw amino-acid sequence, 513 residues long: Na(+)/H(+) antiporter NhaB (513 aa).

12 helical membrane-spanning segments follow: residues L23 to A43, I52 to I72, L97 to F117, L120 to F140, F144 to I164, L202 to P222, F238 to L258, A303 to I323, T348 to I368, L391 to I411, A447 to I467, and V475 to F495.

It belongs to the NhaB Na(+)/H(+) (TC 2.A.34) antiporter family.

It localises to the cell inner membrane. It catalyses the reaction 2 Na(+)(in) + 3 H(+)(out) = 2 Na(+)(out) + 3 H(+)(in). Na(+)/H(+) antiporter that extrudes sodium in exchange for external protons. The protein is Na(+)/H(+) antiporter NhaB of Shigella sonnei (strain Ss046).